Reading from the N-terminus, the 1139-residue chain is Autophagy-related protein 23 (1139 aa).

9 disordered regions span residues 1 to 148 (MFQR…EMSP), 225 to 327 (STDK…YDDE), 356 to 388 (LTTA…SVKD), 475 to 569 (KNEK…DTAG), 648 to 674 (KKIS…KTEY), 720 to 767 (RQES…RETE), 786 to 828 (EDAQ…SKLR), 935 to 961 (AAVE…TEDL), and 977 to 1012 (HERD…ELRT). The segment covering 7 to 18 (SAIDRTIAEEQA) has biased composition (basic and acidic residues). The segment covering 19-37 (RQQTATQSRSPSRTGSTSS) has biased composition (low complexity). Coiled-coil stretches lie at residues 142–170 (KLQE…LLRS) and 215–259 (DMVM…STDQ). Basic and acidic residues-rich tracts occupy residues 225 to 247 (STDK…KLEE), 261 to 273 (KTSD…DAQD), 373 to 385 (ATRE…DVAS), and 475 to 494 (KNEK…KLES). Positions 323 to 495 (SYDDEIPQLQ…TDLTKKLESK (173 aa)) form a coiled coil. Over residues 496-522 (PAPAMLTPAATPMPTVLQPAATSATAA) the composition is skewed to low complexity. Positions 526–537 (GKKKNNKKKKGK) are enriched in basic residues. A coiled-coil region spans residues 566–1067 (DTAGNAELKA…AAQTKLVASS (502 aa)). The span at 651 to 661 (SSSTSDAEASS) shows a compositional bias: low complexity. 4 stretches are compositionally biased toward basic and acidic residues: residues 728–767 (ATKE…RETE), 786–815 (EDAQ…KAEQ), 935–945 (AAVEERDRIED), and 977–1011 (HERD…DELR). The GRIP domain occupies 1082–1132 (SPAGAPDTVYLKTILLQFLEQKDTKLRAQLVPVLGKLLRFDKTDEQKWQKA).

It belongs to the ATG23 family. In terms of assembly, forms a complex with ATG9 and ATG27.

The protein resides in the cytoplasm. The protein localises to the preautophagosomal structure membrane. Functionally, required for cytoplasm to vacuole transport (Cvt) vesicle formation and efficient autophagy. Plays a role in ATG protein retrieval from the pre-autophagosomal structure (PAS) and is especially required for autophagy-dependent cycling of ATG9. Autophagy is required for proper vegetative growth, asexual/sexual reproduction, and full virulence. Autophagy is particularly involved in the biosynthesis of deoxynivalenol (DON), an important virulence determinant. The sequence is that of Autophagy-related protein 23 from Gibberella zeae (strain ATCC MYA-4620 / CBS 123657 / FGSC 9075 / NRRL 31084 / PH-1) (Wheat head blight fungus).